The following is a 302-amino-acid chain: Recombination-associated protein RdgC (302 aa).

It belongs to the RdgC family.

Its subcellular location is the cytoplasm. It is found in the nucleoid. In terms of biological role, may be involved in recombination. This is Recombination-associated protein RdgC from Psychromonas ingrahamii (strain DSM 17664 / CCUG 51855 / 37).